A 450-amino-acid polypeptide reads, in one-letter code: Phosphoglucosamine mutase (450 aa).

The active-site Phosphoserine intermediate is the serine 102. Mg(2+) is bound by residues serine 102, aspartate 244, aspartate 246, and aspartate 248. Phosphoserine is present on serine 102.

This sequence belongs to the phosphohexose mutase family. The cofactor is Mg(2+). Post-translationally, activated by phosphorylation.

It catalyses the reaction alpha-D-glucosamine 1-phosphate = D-glucosamine 6-phosphate. Catalyzes the conversion of glucosamine-6-phosphate to glucosamine-1-phosphate. The polypeptide is Phosphoglucosamine mutase (Syntrophomonas wolfei subsp. wolfei (strain DSM 2245B / Goettingen)).